A 405-amino-acid polypeptide reads, in one-letter code: Magnesium-protoporphyrin IX monomethyl ester [oxidative] cyclase, chloroplastic (405 aa).

The transit peptide at 1–43 directs the protein to the chloroplast; it reads MATEMALVKPISKFSTSSPIFSNSRYGKFTTVRMSSTSQSTTK.

It belongs to the AcsF family. Fe cation serves as cofactor.

The protein localises to the plastid. The protein resides in the chloroplast. It catalyses the reaction Mg-protoporphyrin IX 13-monomethyl ester + 3 NADPH + 3 O2 + 2 H(+) = 3,8-divinyl protochlorophyllide a + 3 NADP(+) + 5 H2O. It participates in porphyrin-containing compound metabolism; chlorophyll biosynthesis. In terms of biological role, catalyzes the formation of the isocyclic ring in chlorophyll biosynthesis. Mediates the cyclase reaction, which results in the formation of divinylprotochlorophyllide (Pchlide) characteristic of all chlorophylls from magnesium-protoporphyrin IX 13-monomethyl ester (MgPMME). The protein is Magnesium-protoporphyrin IX monomethyl ester [oxidative] cyclase, chloroplastic (CRD1) of Gossypium hirsutum (Upland cotton).